A 481-amino-acid polypeptide reads, in one-letter code: UDP-glucose 6-dehydrogenase (481 aa).

NAD(+) contacts are provided by residues 16–21 (GAGYVG), aspartate 41, lysine 46, 94–98 (VNTPT), 135–136 (ST), and glutamate 172. Substrate contacts are provided by residues 168-172 (EFLAE), 227-231 (KLVAN), arginine 267, and 274-280 (QASVGFG). Residue cysteine 283 is the Nucleophile of the active site. NAD(+) is bound at residue 283-286 (CFQK). A substrate-binding site is contributed by 345–346 (FK). Arginine 353 lines the NAD(+) pocket. A substrate-binding site is contributed by arginine 447.

The protein belongs to the UDP-glucose/GDP-mannose dehydrogenase family. In terms of tissue distribution, expressed in the vulva and in oocytes.

It catalyses the reaction UDP-alpha-D-glucose + 2 NAD(+) + H2O = UDP-alpha-D-glucuronate + 2 NADH + 3 H(+). The protein operates within nucleotide-sugar biosynthesis; UDP-alpha-D-glucuronate biosynthesis; UDP-alpha-D-glucuronate from UDP-alpha-D-glucose: step 1/1. Functionally, involved in the biosynthesis of glycosaminoglycans; hyaluronan, chondroitin sulfate, and heparan sulfate. The polypeptide is UDP-glucose 6-dehydrogenase (sqv-4) (Caenorhabditis elegans).